A 44-amino-acid polypeptide reads, in one-letter code: Small, acid-soluble spore protein N (44 aa).

The disordered stretch occupies residues 1 to 44 (MGNPKKNSKDFVPNHIGTQSKKAGGNKGKQMQDTTGKQPIVDNG).

This sequence belongs to the SspN family.

The protein resides in the spore core. In Bacillus cytotoxicus (strain DSM 22905 / CIP 110041 / 391-98 / NVH 391-98), this protein is Small, acid-soluble spore protein N.